Consider the following 410-residue polypeptide: Interstrand DNA cross-link repair glycosylase (410 aa).

Residues 45–47 carry the QXD; important for activity motif; that stretch reads QID.

Belongs to the DNA glycosylase AlkZ-like family.

Functionally, DNA glycosylase involved in the repair of interstrand DNA cross-links (ICLs), which are highly toxic DNA lesions that covalently tether the opposing strands of DNA, thereby inhibiting essential cellular processes such as DNA replication and transcription. Acts by unhooking both sides of the ICLs, forming abasic (AP) sites on both strands. Unhooks ICLs derived from various cross-linking agents, including azinomycin B (AZB) and mechlorethamine, also known as nitrogen mustard (NM), protecting cells from the toxicity of these cross-linking agents. In vitro, also acts on monoadducts and can catalyze the excision of N7-methylguanine (7mGua) from an oligonucleotide containing N7-methyldeoxyguanosine (d7mG). Shows no unhooking activity toward FaPy-ICLs. The sequence is that of Interstrand DNA cross-link repair glycosylase (ycaQ) from Escherichia coli (strain K12).